A 315-amino-acid polypeptide reads, in one-letter code: DNA-directed RNA polymerase subunit alpha (315 aa).

Positions 1–228 are alpha N-terminal domain (alpha-NTD); sequence MLEIEKPKIE…EHFKLFMTLT (228 aa). The interval 245 to 315 is alpha C-terminal domain (alpha-CTD); the sequence is KEKVLEMTIE…LGLGLKKSDE (71 aa).

This sequence belongs to the RNA polymerase alpha chain family. Homodimer. The RNAP catalytic core consists of 2 alpha, 1 beta, 1 beta' and 1 omega subunit. When a sigma factor is associated with the core the holoenzyme is formed, which can initiate transcription.

The enzyme catalyses RNA(n) + a ribonucleoside 5'-triphosphate = RNA(n+1) + diphosphate. Functionally, DNA-dependent RNA polymerase catalyzes the transcription of DNA into RNA using the four ribonucleoside triphosphates as substrates. This is DNA-directed RNA polymerase subunit alpha from Clostridium novyi (strain NT).